Reading from the N-terminus, the 494-residue chain is Sugar phosphate exchanger 3 (494 aa).

The helical transmembrane segment at 16–36 (FSHHHVVVFLLTFFSYSLLHA) threads the bilayer. Residue Asn58 is glycosylated (N-linked (GlcNAc...) asparagine). A run of 5 helical transmembrane segments spans residues 81-101 (TLFLGTLDTIFLFSYAVGLFI), 113-133 (WVLSFGMCSSALVVFVFGALT), 147-167 (LWIVNGLLQSTGWPCVVAVMG), 177-197 (VVFGLWSACASVGNILGACLA), and 209-229 (FLVTASVQFAGGIVIFFGLLV). A glycan (N-linked (GlcNAc...) asparagine) is linked at Asn266. The next 6 helical transmembrane spans lie at 297–317 (LAYACLKLVNYSFFFWLPFYL), 333–353 (IWYDVGGIIGGTLQGFISDVL), 357–377 (APVLALSLLLAVGSLIGYSRS), 386–406 (LLMTVTGFFIGGPSNMISSAI), 428–448 (GIVDGSGSIGAAVGQYLVSLI), and 452–472 (LGWMWVFYFFILMTSCTIVFI).

Belongs to the major facilitator superfamily. Organophosphate:Pi antiporter (OPA) (TC 2.A.1.4) family. In terms of assembly, interacts with ATRAID; the interaction is direct and both proteins are mutually dependent for their stability. In terms of processing, glycosylated. As to expression, expressed in liver, kidney, intestine and pancreas.

The protein localises to the endoplasmic reticulum membrane. The protein resides in the lysosome membrane. Unlike the other SLC37 members, lacks glucose-6-phosphate antiporter activity. In osteoclasts, forms a transporter complex with ATRAID for nitrogen-containing-bisphophonates (N-BPs) required for releasing N-BP molecules that have trafficked to lysosomes through fluid-phase endocytosis into the cytosol. The polypeptide is Sugar phosphate exchanger 3 (Homo sapiens (Human)).